A 440-amino-acid chain; its full sequence is Homocitrate synthase, mitochondrial (440 aa).

Residues 1 to 23 (MSENNEFQSVTESTTAPTTSNPY) show a composition bias toward polar residues. The tract at residues 1–27 (MSENNEFQSVTESTTAPTTSNPYGPNP) is disordered. In terms of domain architecture, Pyruvate carboxyltransferase spans 37–290 (FQLIDSTLRE…RSKYKLHKIR (254 aa)). Residue R45 participates in 2-oxoglutarate binding. E46 is a binding site for Mg(2+). 3 residues coordinate 2-oxoglutarate: H105, R165, and T199. Mg(2+) contacts are provided by H226 and H228. Residue H323 is the Proton acceptor of the active site. At S399 the chain carries Phosphoserine. Phosphothreonine is present on T410.

The protein belongs to the alpha-IPM synthase/homocitrate synthase family. Homocitrate synthase LYS20/LYS21 subfamily. The cofactor is Mg(2+). It depends on Mn(2+) as a cofactor.

The protein localises to the mitochondrion. It carries out the reaction acetyl-CoA + 2-oxoglutarate + H2O = (2R)-homocitrate + CoA + H(+). It participates in amino-acid biosynthesis; L-lysine biosynthesis via AAA pathway; L-alpha-aminoadipate from 2-oxoglutarate: step 1/5. In terms of biological role, catalyzes the aldol-type condensation of 2-oxoglutarate with acetyl-CoA to yield homocitrate. Carries out the first step of the alpha-aminoadipate (AAA) lysine biosynthesis pathway. This is Homocitrate synthase, mitochondrial (LYS21) from Saccharomyces cerevisiae (strain ATCC 204508 / S288c) (Baker's yeast).